The following is a 23-amino-acid chain: Protein DCL, chloroplastic (23 aa).

The protein localises to the plastid. It localises to the chloroplast. Its function is as follows. Has a function in the early stage of chloroplast development and palisade cell morphogenesis. The sequence is that of Protein DCL, chloroplastic from Pseudotsuga menziesii (Douglas-fir).